A 390-amino-acid polypeptide reads, in one-letter code: Nucleosome assembly protein 1-like 1 (390 aa).

The segment covering 1–10 (MADIDNKEQS) has biased composition (basic and acidic residues). The interval 1–32 (MADIDNKEQSELDQDLEDVEEVEEEETGEETK) is disordered. Alanine 2 is modified (N-acetylalanine). At serine 10 the chain carries Phosphoserine. The segment covering 11-28 (ELDQDLEDVEEVEEEETG) has biased composition (acidic residues). Phosphothreonine occurs at positions 62 and 64. A Phosphoserine modification is found at serine 69. N6-acetyllysine is present on lysine 116. An NAP1L motif motif is present at residues 125–150 (YEPTEEECEWKPDEEDEVSEELKEKA). The span at 131–143 (ECEWKPDEEDEVS) shows a compositional bias: acidic residues. A disordered region spans residues 131-163 (ECEWKPDEEDEVSEELKEKAKIEDEKKDEEKED). At serine 143 the chain carries Phosphoserine. The span at 144-163 (EELKEKAKIEDEKKDEEKED) shows a compositional bias: basic and acidic residues. The Nuclear localization signal signature appears at 272–278 (IKKKQKH). The segment covering 345–375 (AIEDDDDDYDEEGEEADEEGEEEGDEENDPD) has biased composition (acidic residues). Residues 345–390 (AIEDDDDDYDEEGEEADEEGEEEGDEENDPDYDPKKDQNPAECKQQ) are disordered. 5-glutamyl polyglycine occurs at positions 358 and 359. Residues 376 to 390 (YDPKKDQNPAECKQQ) show a composition bias toward basic and acidic residues. Cysteine 387 bears the Cysteine methyl ester mark. Residue cysteine 387 is the site of S-farnesyl cysteine attachment. Residues 388–390 (KQQ) constitute a propeptide, removed in mature form.

It belongs to the nucleosome assembly protein (NAP) family. In terms of assembly, homodimer. The dimer binds strongly and sequentially to single and double H2A-H2B heterodimers. Interacts with ERCC6; this interaction increases ERCC6 processivity. Interacts with RAD54. Interacts with SETD1A. Polyglycylated by TTLL10 on glutamate residues, resulting in polyglycine chains on the gamma-carboxyl group. Both polyglutamylation and polyglycylation modifications can coexist on the same protein on adjacent residues, and lowering polyglycylation levels increases polyglutamylation, and reciprocally. In terms of processing, polyglutamylated by TTLL4 on glutamate residues, resulting in polyglutamate chains on the gamma-carboxyl group. Both polyglutamylation and polyglycylation modifications can coexist on the same protein on adjacent residues, and lowering polyglycylation levels increases polyglutamylation, and reciprocally.

Its subcellular location is the nucleus. The protein localises to the melanosome. It localises to the cytoplasm. Histone chaperone that plays a role in the nuclear import of H2A-H2B and nucleosome assembly. Also participates in several important DNA repair mechanisms: greatly enhances ERCC6-mediated chromatin remodeling which is essential for transcription-coupled nucleotide excision DNA repair. Also stimulates homologous recombination (HR) by RAD51 and RAD54 which is essential in mitotic DNA double strand break (DSB) repair. Plays a key role in the regulation of embryonic neurogenesis. Promotes the proliferation of neural progenitors and inhibits neuronal differentiation during cortical development. Regulates neurogenesis via the modulation of RASSF10; regulates RASSF10 expression by promoting SETD1A-mediated H3K4 methylation at the RASSF10 promoter. This is Nucleosome assembly protein 1-like 1 (Nap1l1) from Rattus norvegicus (Rat).